The primary structure comprises 56 residues: Small ribosomal subunit protein uS14 (56 aa).

Positions 21, 24, 39, and 42 each coordinate Zn(2+).

It belongs to the universal ribosomal protein uS14 family. As to quaternary structure, component of the 40S small ribosomal subunit. It depends on Zn(2+) as a cofactor.

Its subcellular location is the cytoplasm. It localises to the cytosol. It is found in the rough endoplasmic reticulum. Component of the small ribosomal subunit. The ribosome is a large ribonucleoprotein complex responsible for the synthesis of proteins in the cell. The polypeptide is Small ribosomal subunit protein uS14 (rps29) (Hippocampus comes (Tiger tail seahorse)).